The sequence spans 412 residues: Serine hydroxymethyltransferase (412 aa).

Residues leucine 117 and 121–123 each bind (6S)-5,6,7,8-tetrahydrofolate; that span reads GHL. Lysine 226 bears the N6-(pyridoxal phosphate)lysine mark.

The protein belongs to the SHMT family. Homodimer. Requires pyridoxal 5'-phosphate as cofactor.

Its subcellular location is the cytoplasm. It carries out the reaction (6R)-5,10-methylene-5,6,7,8-tetrahydrofolate + glycine + H2O = (6S)-5,6,7,8-tetrahydrofolate + L-serine. It participates in one-carbon metabolism; tetrahydrofolate interconversion. The protein operates within amino-acid biosynthesis; glycine biosynthesis; glycine from L-serine: step 1/1. In terms of biological role, catalyzes the reversible interconversion of serine and glycine with tetrahydrofolate (THF) serving as the one-carbon carrier. This reaction serves as the major source of one-carbon groups required for the biosynthesis of purines, thymidylate, methionine, and other important biomolecules. Also exhibits THF-independent aldolase activity toward beta-hydroxyamino acids, producing glycine and aldehydes, via a retro-aldol mechanism. In Natranaerobius thermophilus (strain ATCC BAA-1301 / DSM 18059 / JW/NM-WN-LF), this protein is Serine hydroxymethyltransferase.